A 290-amino-acid polypeptide reads, in one-letter code: Arylamine N-acetyltransferase 1 (290 aa).

The residue at position 1 (methionine 1) is an N-acetylmethionine. Residue cysteine 68 is the Acyl-thioester intermediate of the active site. CoA contacts are provided by threonine 103 and glycine 104. Position 106 to 107 (106 to 107 (IH)) interacts with substrate. Catalysis depends on residues histidine 107 and aspartate 122. CoA-binding residues include tyrosine 208 and serine 214.

It belongs to the arylamine N-acetyltransferase family.

Its subcellular location is the cytoplasm. The enzyme catalyses an arylamine + acetyl-CoA = an N-acetylarylamine + CoA. Functionally, participates in the detoxification of a plethora of hydrazine and arylamine drugs. Catalyzes the N- or O-acetylation of various arylamine and heterocyclic amine substrates and is able to bioactivate several known carcinogens. The protein is Arylamine N-acetyltransferase 1 (NAT1) of Homo sapiens (Human).